The primary structure comprises 184 residues: ATP-dependent protease subunit HslV (184 aa).

Thr-12 is an active-site residue. Na(+) is bound by residues Ala-166, Cys-169, and Thr-172.

This sequence belongs to the peptidase T1B family. HslV subfamily. In terms of assembly, a double ring-shaped homohexamer of HslV is capped on each side by a ring-shaped HslU homohexamer. The assembly of the HslU/HslV complex is dependent on binding of ATP.

The protein localises to the cytoplasm. The catalysed reaction is ATP-dependent cleavage of peptide bonds with broad specificity.. Allosterically activated by HslU binding. Functionally, protease subunit of a proteasome-like degradation complex believed to be a general protein degrading machinery. In Brucella canis (strain ATCC 23365 / NCTC 10854 / RM-666), this protein is ATP-dependent protease subunit HslV.